We begin with the raw amino-acid sequence, 75 residues long: UPF0291 protein lin1342 (75 aa).

Residues 55-75 are disordered; it reads IDPKGNDVTPHKIKQMRKNKK. The segment covering 65 to 75 has biased composition (basic residues); that stretch reads HKIKQMRKNKK.

The protein belongs to the UPF0291 family.

It localises to the cytoplasm. The chain is UPF0291 protein lin1342 from Listeria innocua serovar 6a (strain ATCC BAA-680 / CLIP 11262).